Reading from the N-terminus, the 387-residue chain is Protein TsgA homolog (387 aa).

The next 12 helical transmembrane spans lie at 11-31 (WISF…GMIM), 47-67 (NIFT…SWLI), 76-96 (LIFG…STSI), 101-121 (INIF…TFII), 134-154 (LLLT…ISAY), 160-180 (ILWY…FILT), 205-225 (IILL…FISW), 243-263 (VLVS…SFII), 271-291 (MFIF…YSKS), 299-319 (IISL…LASL), 331-351 (LILF…SPIV), and 358-378 (TTLI…CIIF).

Belongs to the major facilitator superfamily. TsgA family.

It localises to the cell membrane. This is Protein TsgA homolog from Buchnera aphidicola subsp. Schizaphis graminum (strain Sg).